Here is a 251-residue protein sequence, read N- to C-terminus: MSEGESKSTHFGYKTVEADKKADLVAGVFHSVAAKYDIMNDVMSFGIHRFWKRYTIEVSGARPGMKVLDLAGGTGDLTAKFSHLVGDKGEVVLADINDSMLKVGRTKLRDRGIVSNVSYVQANAEALPFPDNHFDIITIAFGLRNVTDKDAALRSMNRVLKPGGKLLVLEFSKPQHEVMRKVYDLYSFKVLPKMGQLITKDADSYEYLAESIRMHPDQDTLKQMMVDAGFEQVDYTNMTDGIVALHRGYKF.

S-adenosyl-L-methionine is bound by residues threonine 74, aspartate 95, and 123–124 (NA).

It belongs to the class I-like SAM-binding methyltransferase superfamily. MenG/UbiE family.

It catalyses the reaction a 2-demethylmenaquinol + S-adenosyl-L-methionine = a menaquinol + S-adenosyl-L-homocysteine + H(+). It carries out the reaction a 2-methoxy-6-(all-trans-polyprenyl)benzene-1,4-diol + S-adenosyl-L-methionine = a 5-methoxy-2-methyl-3-(all-trans-polyprenyl)benzene-1,4-diol + S-adenosyl-L-homocysteine + H(+). It functions in the pathway quinol/quinone metabolism; menaquinone biosynthesis; menaquinol from 1,4-dihydroxy-2-naphthoate: step 2/2. Its pathway is cofactor biosynthesis; ubiquinone biosynthesis. In terms of biological role, methyltransferase required for the conversion of demethylmenaquinol (DMKH2) to menaquinol (MKH2) and the conversion of 2-polyprenyl-6-methoxy-1,4-benzoquinol (DDMQH2) to 2-polyprenyl-3-methyl-6-methoxy-1,4-benzoquinol (DMQH2). In Shewanella oneidensis (strain ATCC 700550 / JCM 31522 / CIP 106686 / LMG 19005 / NCIMB 14063 / MR-1), this protein is Ubiquinone/menaquinone biosynthesis C-methyltransferase UbiE.